We begin with the raw amino-acid sequence, 410 residues long: Phosphoglycerate kinase (410 aa).

Residues 22–24, R39, 62–65, R119, and R159 each bind substrate; these read DIN and HQSR. ATP is bound by residues E332 and 358–361; that span reads GGHL.

It belongs to the phosphoglycerate kinase family. Homodimer.

Its subcellular location is the cytoplasm. It carries out the reaction (2R)-3-phosphoglycerate + ATP = (2R)-3-phospho-glyceroyl phosphate + ADP. The protein operates within carbohydrate degradation; glycolysis; pyruvate from D-glyceraldehyde 3-phosphate: step 2/5. This Methanothermus fervidus (strain ATCC 43054 / DSM 2088 / JCM 10308 / V24 S) protein is Phosphoglycerate kinase (pgk).